Reading from the N-terminus, the 336-residue chain is Hdr-like menaquinol oxidoreductase cytochrome b-like subunit (336 aa).

6 consecutive transmembrane segments (helical) span residues 4–24 (ALYI…IGTI), 60–80 (IDSP…VFLF), 102–122 (WLWL…IRHL), 145–165 (VAIV…LAFL), 184–204 (HLIL…RYII), and 232–252 (LHWL…YIPF).

It localises to the cell membrane. Has menaquinol-oxidizing activity. The HmeC and HmeD subunits may together mediate electron transfer from menaquinol to an unidentified electron acceptor on the cytoplasmic side of the membrane. The protein is Hdr-like menaquinol oxidoreductase cytochrome b-like subunit (hmeC) of Archaeoglobus profundus (strain DSM 5631 / JCM 9629 / NBRC 100127 / Av18).